The primary structure comprises 111 residues: Cyclin-dependent protein kinase inhibitor SMR2 (111 aa).

Positions 1-66 (MSKLLETLEE…PPPRKRPREI (66 aa)) are disordered. Basic and acidic residues predominate over residues 10–35 (EEKTVEQKPRSQEEEDHQDSSKKEEL).

In terms of assembly, interacts with CYCD2-1. Interacts with CDKB1-1. Expressed at low levels in roots and stems. Expressed in the root vascular tissue.

Its subcellular location is the nucleus. Cyclin-dependent protein kinase (CDK) inhibitor that restricts cell proliferation and cooperates with SIM and SMR1 to promote endoreplication during leaf development. This chain is Cyclin-dependent protein kinase inhibitor SMR2, found in Arabidopsis thaliana (Mouse-ear cress).